A 280-amino-acid polypeptide reads, in one-letter code: Diaminopimelate epimerase (280 aa).

3 residues coordinate substrate: N12, Q45, and N65. Catalysis depends on C74, which acts as the Proton donor. Substrate is bound by residues 75-76 (GN), N163, N196, and 214-215 (ER). The Proton acceptor role is filled by C223. Residue 224 to 225 (GT) coordinates substrate.

The protein belongs to the diaminopimelate epimerase family. In terms of assembly, homodimer.

It is found in the cytoplasm. It catalyses the reaction (2S,6S)-2,6-diaminopimelate = meso-2,6-diaminopimelate. It functions in the pathway amino-acid biosynthesis; L-lysine biosynthesis via DAP pathway; DL-2,6-diaminopimelate from LL-2,6-diaminopimelate: step 1/1. In terms of biological role, catalyzes the stereoinversion of LL-2,6-diaminopimelate (L,L-DAP) to meso-diaminopimelate (meso-DAP), a precursor of L-lysine and an essential component of the bacterial peptidoglycan. This chain is Diaminopimelate epimerase, found in Shewanella sediminis (strain HAW-EB3).